A 205-amino-acid polypeptide reads, in one-letter code: Large ribosomal subunit protein uL4 (205 aa).

The disordered stretch occupies residues 56–78; it reads VSGTTAKPYRQKHTGRARQGSLR.

Belongs to the universal ribosomal protein uL4 family. Part of the 50S ribosomal subunit.

Its function is as follows. One of the primary rRNA binding proteins, this protein initially binds near the 5'-end of the 23S rRNA. It is important during the early stages of 50S assembly. It makes multiple contacts with different domains of the 23S rRNA in the assembled 50S subunit and ribosome. Functionally, forms part of the polypeptide exit tunnel. This chain is Large ribosomal subunit protein uL4, found in Ehrlichia ruminantium (strain Gardel).